A 315-amino-acid chain; its full sequence is Calumenin (315 aa).

The first 19 residues, 1 to 19, serve as a signal peptide directing secretion; it reads MDLRQFLMCLSLCTAFALS. At Tyr-47 the chain carries Phosphotyrosine. Thr-65 bears the Phosphothreonine mark. EF-hand domains lie at 68-103, 104-139, 151-186, 188-223, 229-264, and 265-300; these read ESKE…AQKK, YIYD…TYLD, PIMV…EEYD, MKDI…HDGN, WVKT…SDYD, and HAEA…FVGS. Ser-69 is modified (phosphoserine). Ca(2+) is bound by residues Asp-81, Asp-83, Asp-85, Glu-92, Asp-117, Asn-119, Asp-121, and Glu-128. Asn-131 carries N-linked (GlcNAc...) asparagine glycosylation. Ca(2+) is bound by residues Asp-164, Asp-166, Asp-168, Glu-175, Asp-201, Asn-203, Asp-205, Glu-212, Asp-242, Asn-244, Asp-246, Lys-248, and Glu-253. Thr-254 carries the phosphothreonine modification. Residues Ser-261 and Ser-277 each carry the phosphoserine modification. Ca(2+)-binding residues include Asp-278, Asp-280, Asp-282, Lys-284, and Glu-289. The short motif at 312-315 is the Prevents secretion from ER element; the sequence is HDEF.

This sequence belongs to the CREC family. As to quaternary structure, binds crotoxin. Interacts with GGCX.

It localises to the endoplasmic reticulum membrane. The protein resides in the golgi apparatus. The protein localises to the secreted. It is found in the melanosome. Its subcellular location is the sarcoplasmic reticulum lumen. Functionally, involved in regulation of vitamin K-dependent carboxylation of multiple N-terminal glutamate residues. Seems to inhibit gamma-carboxylase GGCX. Binds 7 calcium ions with a low affinity. The protein is Calumenin (Calu) of Rattus norvegicus (Rat).